A 370-amino-acid polypeptide reads, in one-letter code: Quinolinate synthase (370 aa).

Iminosuccinate-binding residues include H62 and S83. C128 serves as a coordination point for [4Fe-4S] cluster. Iminosuccinate is bound by residues 154-156 (YAN) and S171. C215 lines the [4Fe-4S] cluster pocket. Iminosuccinate-binding positions include 241-243 (HPE) and T258. C312 contacts [4Fe-4S] cluster.

Belongs to the quinolinate synthase family. Type 1 subfamily. [4Fe-4S] cluster is required as a cofactor.

The protein resides in the cytoplasm. The enzyme catalyses iminosuccinate + dihydroxyacetone phosphate = quinolinate + phosphate + 2 H2O + H(+). It functions in the pathway cofactor biosynthesis; NAD(+) biosynthesis; quinolinate from iminoaspartate: step 1/1. Catalyzes the condensation of iminoaspartate with dihydroxyacetone phosphate to form quinolinate. The chain is Quinolinate synthase from Neisseria meningitidis serogroup A / serotype 4A (strain DSM 15465 / Z2491).